We begin with the raw amino-acid sequence, 173 residues long: Large ribosomal subunit protein uL10 (173 aa).

This sequence belongs to the universal ribosomal protein uL10 family. In terms of assembly, part of the ribosomal stalk of the 50S ribosomal subunit. The N-terminus interacts with L11 and the large rRNA to form the base of the stalk. The C-terminus forms an elongated spine to which L12 dimers bind in a sequential fashion forming a multimeric L10(L12)X complex.

Forms part of the ribosomal stalk, playing a central role in the interaction of the ribosome with GTP-bound translation factors. The polypeptide is Large ribosomal subunit protein uL10 (Chlorobaculum tepidum (strain ATCC 49652 / DSM 12025 / NBRC 103806 / TLS) (Chlorobium tepidum)).